The sequence spans 242 residues: Type III pantothenate kinase (242 aa).

7–14 is an ATP binding site; sequence DNSNTRTK. Substrate is bound by residues Tyr-88 and 95–98; that span reads GADR. Residue Asp-97 is the Proton acceptor of the active site. Position 117 (Asp-117) interacts with K(+). Thr-120 is a binding site for ATP. Position 172 (Thr-172) interacts with substrate.

Belongs to the type III pantothenate kinase family. Homodimer. NH4(+) is required as a cofactor. It depends on K(+) as a cofactor.

The protein localises to the cytoplasm. The enzyme catalyses (R)-pantothenate + ATP = (R)-4'-phosphopantothenate + ADP + H(+). The protein operates within cofactor biosynthesis; coenzyme A biosynthesis; CoA from (R)-pantothenate: step 1/5. Functionally, catalyzes the phosphorylation of pantothenate (Pan), the first step in CoA biosynthesis. The sequence is that of Type III pantothenate kinase from Akkermansia muciniphila (strain ATCC BAA-835 / DSM 22959 / JCM 33894 / BCRC 81048 / CCUG 64013 / CIP 107961 / Muc).